Here is a 372-residue protein sequence, read N- to C-terminus: tRNA-specific 2-thiouridylase MnmA (372 aa).

Residues 16–23 (GMSGGVDS) and Met-42 each bind ATP. The tract at residues 102 to 104 (NPD) is interaction with target base in tRNA. Cys-107 functions as the Nucleophile in the catalytic mechanism. Cys-107 and Cys-205 form a disulfide bridge. Gly-132 provides a ligand contact to ATP. The interval 155 to 157 (KDQ) is interaction with tRNA. Cys-205 (cysteine persulfide intermediate) is an active-site residue. The segment at 317-318 (RY) is interaction with tRNA.

It belongs to the MnmA/TRMU family.

It is found in the cytoplasm. It carries out the reaction S-sulfanyl-L-cysteinyl-[protein] + uridine(34) in tRNA + AH2 + ATP = 2-thiouridine(34) in tRNA + L-cysteinyl-[protein] + A + AMP + diphosphate + H(+). Functionally, catalyzes the 2-thiolation of uridine at the wobble position (U34) of tRNA, leading to the formation of s(2)U34. The chain is tRNA-specific 2-thiouridylase MnmA from Shewanella sp. (strain ANA-3).